Reading from the N-terminus, the 351-residue chain is AA9 family lytic polysaccharide monooxygenase A (351 aa).

Residues 1-20 (MSNKAATLLAALSGAALVAA) form the signal peptide. Positions 21 and 107 each coordinate Cu(2+). A disulfide bridge connects residues C76 and C196. Residues H182 and Q191 each contribute to the O2 site. Y193 contacts Cu(2+). A CBM1 domain is found at 315-351 (GVAPKWGQCGGNGWTGPTVCASGSTCTVLNPYYSQCI).

This sequence belongs to the polysaccharide monooxygenase AA9 family. Requires Cu(2+) as cofactor.

Its subcellular location is the secreted. The enzyme catalyses [(1-&gt;4)-beta-D-glucosyl]n+m + reduced acceptor + O2 = 4-dehydro-beta-D-glucosyl-[(1-&gt;4)-beta-D-glucosyl]n-1 + [(1-&gt;4)-beta-D-glucosyl]m + acceptor + H2O.. Functionally, lytic polysaccharide monooxygenase (LPMO) that depolymerizes crystalline and amorphous polysaccharides via the oxidation of scissile alpha- or beta-(1-4)-glycosidic bonds, yielding C1 and C4 oxidation products. Catalysis by LPMOs requires the reduction of the active-site copper from Cu(II) to Cu(I) by a reducing agent and H(2)O(2) or O(2) as a cosubstrate. The protein is AA9 family lytic polysaccharide monooxygenase A of Podospora anserina (strain S / ATCC MYA-4624 / DSM 980 / FGSC 10383) (Pleurage anserina).